A 351-amino-acid polypeptide reads, in one-letter code: Circumsporozoite protein (351 aa).

The N-terminal stretch at 1–22 (MKNFILLAVSSILLVDLLPTHF) is a signal peptide. Positions 50 to 266 (AQVRQSASRG…GQNNQGANVP (217 aa)) are disordered. Residues 61 to 96 (GLGEKPKEGADKEKKKEKEKEKEEEPKKPNENKLKQ) show a composition bias toward basic and acidic residues. The interval 80–88 (KEKEEEPKK) is required for the binding to heparan sulfate proteoglycans (HSPGs) on the surface of host hepatocytes. The segment at 93 to 97 (KLKQP) is region I; contains the proteolytic cleavage site. Residues 97–219 (PEQPAAGAGG…AGARGEQPAA (123 aa)) are compositionally biased toward low complexity. Tandem repeats lie at residues 101 to 109 (AAGAGGEQP), 110 to 118 (AAGAGGEQP), 119 to 127 (AAGAGGEQP), 128 to 136 (AAGARGEQP), 137 to 145 (AAGAGGEQP), 146 to 154 (AAGAGGEQP), 155 to 163 (AAGAGGEQP), 164 to 172 (AAGAGGEQP), 173 to 181 (AAGAGGEQP), 182 to 190 (AAGARGEQP), 191 to 199 (AAGAGGEQP), 200 to 208 (AAGAGGEQP), 209 to 217 (AAGARGEQP), and 218 to 226 (AAGAGGEQP). Residues 101 to 226 (AAGAGGEQPA…PAAGAGGEQP (126 aa)) are 14 X 9 AA tandem repeats of A-A-G-A-[GR]-G-E-Q-P. A compositionally biased stretch (gly residues) spans 244-256 (GARGGNAGAGKGQ). The TSP type-1 domain occupies 277–329 (KIRSSVTTEWTPCSVTCGNGVRIRRKGHAGNKKAEDLTMDDLEVEACVMDKCA). Disulfide bonds link Cys289–Cys323 and Cys293–Cys328. An O-linked (Fuc) threonine glycan is attached at Thr292. Cys328 carries the GPI-anchor amidated cysteine lipid modification. A propeptide spans 329–351 (AGIFNVVSNSLGLVILLVLALFN) (removed in mature form).

Belongs to the plasmodium circumsporozoite protein family. During host cell invasion, proteolytically cleaved at the cell membrane in the region I by a papain-like cysteine protease of parasite origin. Cleavage is triggered by the sporozoite contact with highly sulfated heparan sulfate proteoglycans (HSPGs) present on the host hepatocyte cell surface. Cleavage exposes the TSP type-1 (TSR) domain and is required for productive invasion of host hepatocytes but not for adhesion to the host cell membrane. Cleavage is dispensable for sporozoite development in the oocyst, motility and for traversal of host and vector cells. Post-translationally, O-glycosylated; maybe by POFUT2.

Its subcellular location is the cell membrane. The protein localises to the cytoplasm. In terms of biological role, essential sporozoite protein. In the mosquito vector, required for sporozoite development in the oocyst, migration through the vector hemolymph and entry into the vector salivary glands. In the vertebrate host, required for sporozoite migration through the host dermis and infection of host hepatocytes. Binds to highly sulfated heparan sulfate proteoglycans (HSPGs) on the surface of host hepatocytes. Its function is as follows. In the vertebrate host, binds to highly sulfated heparan sulfate proteoglycans (HSPGs) on the surface of host hepatocytes and is required for sporozoite invasion of the host hepatocytes. The chain is Circumsporozoite protein from Plasmodium knowlesi (strain nuri).